We begin with the raw amino-acid sequence, 607 residues long: Elongation factor 4 (607 aa).

The region spanning 11–193 (SKIRNFSIIA…QIVEKVPAPT (183 aa)) is the tr-type G domain. GTP contacts are provided by residues 23 to 28 (DHGKST) and 140 to 143 (NKID).

The protein belongs to the TRAFAC class translation factor GTPase superfamily. Classic translation factor GTPase family. LepA subfamily.

It is found in the cell membrane. The enzyme catalyses GTP + H2O = GDP + phosphate + H(+). In terms of biological role, required for accurate and efficient protein synthesis under certain stress conditions. May act as a fidelity factor of the translation reaction, by catalyzing a one-codon backward translocation of tRNAs on improperly translocated ribosomes. Back-translocation proceeds from a post-translocation (POST) complex to a pre-translocation (PRE) complex, thus giving elongation factor G a second chance to translocate the tRNAs correctly. Binds to ribosomes in a GTP-dependent manner. The chain is Elongation factor 4 from Bacillus cereus (strain Q1).